We begin with the raw amino-acid sequence, 816 residues long: Mechanosensitive cation channel TMEM63B (816 aa).

Residues 1-46 (MLPYVIATLGSAGSTCKASTCSNSTKDYCYSARIRSTVLQGLPFGG) lie on the Extracellular side of the membrane. Residues 47–71 (VPTVLALDFMCFLALLFVFSILRKV) form a helical membrane-spanning segment. S-palmitoyl cysteine attachment occurs at residues Cys57 and Cys119. Over 72 to 138 (AWDYGRLALV…KDDEIRDKCG (67 aa)) the chain is Cytoplasmic. Residues 139-171 (GDAVHYLSFQRHIIGLLVAVGVLSVGIVLPVNF) traverse the membrane as a helical segment. Over 172–195 (SGDLLENNAYSFGRTTIANLNSGN) the chain is Extracellular. A helical transmembrane segment spans residues 196-220 (NLLWLHTSFAFLYLLLTVYSMRRHT). Residues 221 to 420 (SKMRYKEDDL…IYWEHLSIRG (200 aa)) are Cytoplasmic-facing. The intracellular linker IL2; confers mechanosensitivity stretch occupies residues 224-419 (RYKEDDLVKR…NIYWEHLSIR (196 aa)). 2 S-palmitoyl cysteine lipidation sites follow: Cys375 and Cys391. A helical transmembrane segment spans residues 421-450 (FIWWIRCLVINVVLFILLFFLTTPAIIITT). At 451-465 (MDKFNVTKPVEYLNN) the chain is on the extracellular side. A helical transmembrane segment spans residues 466–495 (PIITQFFPTLLLWCFSALLPTIVYYSAFFE). Over 496–499 (AHWT) the chain is Cytoplasmic. Residues 500-536 (RSGENRTTMHKCYTFLIFMVLLLPSLGLSSLDVFFRW) form a helical membrane-spanning segment. Residues 537 to 559 (LFDKKFLAEAAVRFECVFLPDNG) lie on the Extracellular side of the membrane. A helical membrane pass occupies residues 560–592 (AFFVNYVIASAFIGNAMDLLRIPGLLMYMIRLC). Residues 560-592 (AFFVNYVIASAFIGNAMDLLRIPGLLMYMIRLC) are gating helix. At 593-612 (LARSAAERRNVKRHQAYEFQ) the chain is on the cytoplasmic side. A helical membrane pass occupies residues 613–631 (FGAAYAWMMCVFTVVMTYS). Residues 632 to 634 (ITC) are Extracellular-facing. A helical membrane pass occupies residues 635–659 (PIIVPFGLMYMLLKHLVDRYNLYYA). Residues 660-666 (YLPAKLD) lie on the Cytoplasmic side of the membrane. The chain crosses the membrane as a helical span at residues 667 to 695 (KKIHSGAVNQVVAAPILCLFWLLFFSTMR). At 696 to 700 (TGFLA) the chain is on the extracellular side. The helical transmembrane segment at 701–721 (PTSMFTFVVLVITIVICLCHV) threads the bilayer. S-palmitoyl cysteine attachment occurs at residues Cys719 and Cys722. Residues 722–816 (CFGHFKYLSA…DSLIENEIRQ (95 aa)) lie on the Cytoplasmic side of the membrane.

This sequence belongs to the CSC1 (TC 1.A.17) family. Monomer. Palmitoylation is required for localization to the plasma membrane and stability.

It is found in the cell membrane. Its subcellular location is the lysosome membrane. The protein localises to the early endosome membrane. It catalyses the reaction Ca(2+)(in) = Ca(2+)(out). It carries out the reaction Mg(2+)(in) = Mg(2+)(out). The catalysed reaction is K(+)(in) = K(+)(out). The enzyme catalyses Na(+)(in) = Na(+)(out). It catalyses the reaction Cs(+)(in) = Cs(+)(out). Functionally, mechanosensitive cation channel with low conductance and high activation threshold. Osmosensitive cation channel preferentially activated by hypotonic stress. Also acts as a phospholipid scramblase in response to changes in membrane structure: upon changes in membrane curvature and thickness, alters its conformation and translocates phospholipids, thereby controlling plasma membrane lipid distribution. The protein is Mechanosensitive cation channel TMEM63B of Gallus gallus (Chicken).